A 105-amino-acid polypeptide reads, in one-letter code: MHIKKGDNVKVIAGKDKGKEGKVIATLPKKDRVVVEGVNIMKKHQKPTQLNPEGGILETEAAIHVSNVQLLDPKTNEPTRVGYKFVDGKKVRIAKKSGEEIKSNN.

The protein belongs to the universal ribosomal protein uL24 family. Part of the 50S ribosomal subunit.

Functionally, one of two assembly initiator proteins, it binds directly to the 5'-end of the 23S rRNA, where it nucleates assembly of the 50S subunit. One of the proteins that surrounds the polypeptide exit tunnel on the outside of the subunit. The sequence is that of Large ribosomal subunit protein uL24 from Staphylococcus aureus (strain Mu3 / ATCC 700698).